Consider the following 878-residue polypeptide: E3 ubiquitin-protein ligase SH3RF3 (878 aa).

The tract at residues 19–40 is disordered; sequence RGEGEDRQGEQQRGAQARTEED. The segment at 52–93 adopts an RING-type zinc-finger fold; that stretch reads CSVCLERLDTTAKVLPCQHTFCRRCLESIVCSRHELRCPECR. The segment at 120 to 145 is disordered; sequence PRTGASPGSSPPARPGPGTFSALAGG. SH3 domains are found at residues 187-246 and 249-312; these read SQLP…CVRP and QALP…LNDS. Positions 364–433 are interaction with RAC1; the sequence is RVDSKKNAKK…TVPTQDSSSA (70 aa). Ser395 bears the Phosphoserine mark. The SH3 3 domain maps to 458–519; the sequence is LPLNVYLALY…PGNYVTPVSR (62 aa). Disordered stretches follow at residues 574 to 659 and 688 to 758; these read QHPA…CPRP and PISG…MGPE. 4 stretches are compositionally biased toward polar residues: residues 590 to 609, 618 to 633, 643 to 653, and 690 to 699; these read AQPT…THAS, ATVS…SRLP, ASPQHGQQSPA, and SGLSTPSLIN. Residues 703 to 716 are compositionally biased toward basic and acidic residues; the sequence is KPDDKKNEKKEKKS. The span at 741–752 shows a compositional bias: polar residues; that stretch reads HDPQSAMDTSLQ. Ser792 carries the post-translational modification Phosphoserine. In terms of domain architecture, SH3 4 spans 819-878; sequence LPRERYRVVVSYPPQSEAEIELKEGDIVFVHKKHEDGWFKGTLQRNGRTGLFPGSFVESF.

Belongs to the SH3RF family. In terms of assembly, interacts (via SH3 domain 3) with PAK2. Interacts with RAC1 (GTP-bound form). Post-translationally, autoubiquitinated.

The catalysed reaction is S-ubiquitinyl-[E2 ubiquitin-conjugating enzyme]-L-cysteine + [acceptor protein]-L-lysine = [E2 ubiquitin-conjugating enzyme]-L-cysteine + N(6)-ubiquitinyl-[acceptor protein]-L-lysine.. The protein operates within protein modification; protein ubiquitination. Functionally, has E3 ubiquitin-protein ligase activity. The polypeptide is E3 ubiquitin-protein ligase SH3RF3 (Sh3rf3) (Mus musculus (Mouse)).